The sequence spans 338 residues: Trace amine-associated receptor 9 (338 aa).

Topologically, residues 1–23 (MELCYENVNGSCIKSSYSPWPRA) are extracellular. Residue Asn-9 is glycosylated (N-linked (GlcNAc...) asparagine). Cystine bridges form between Cys-12/Cys-176 and Cys-95/Cys-180. A helical transmembrane segment spans residues 24–48 (ILYAVLGLGALLAVFGNLLVITAIL). The Cytoplasmic portion of the chain corresponds to 49-58 (HFKQLHTPTN). A helical membrane pass occupies residues 59 to 80 (FLVASLACADFLVGVTVMPFST). The Extracellular portion of the chain corresponds to 81–95 (VRSVEGCWYFGDTYC). The helical transmembrane segment at 96–118 (KFHTCFDTSFCFASLFHLCCISI) threads the bilayer. Positions 102 and 103 each coordinate spermidine. Over 119-138 (DRYVAVTDPLTYPTKFTISV) the chain is Cytoplasmic. A helical membrane pass occupies residues 139–160 (SGVCIALSWFFSVTYSFSIFYT). Residues 161 to 186 (GANEEGIEELVVALTCVGGCQAPLNQ) lie on the Extracellular side of the membrane. Residues 164 to 177 (EEGIEELVVALTCV) form an extracellular Loop 2 (ECL2) region. The helical transmembrane segment at 187-208 (NWVLLCFLLFFLPTVVMVFLYG) threads the bilayer. Topologically, residues 209–246 (RIFLVAKQQARKIEGSANQPQASSESYKERVARRERKA) are cytoplasmic. The chain crosses the membrane as a helical span at residues 247–270 (AKTLGIAMAAFLVSWLPYIIDAVI). The Extracellular segment spans residues 271 to 283 (DAYMNFITPAYVY). Residues 284-304 (EILVWCVYYNSAMNPLIYAFF) traverse the membrane as a helical segment. Topologically, residues 305–338 (YPWFRKAIKLIVSGKVFRADSSRTNLFSEEAGAG) are cytoplasmic.

The protein belongs to the G-protein coupled receptor 1 family. As to expression, mainly expressed in neurons of the olfactory epithelium. Also expressed in the intestine.

The protein localises to the cell membrane. Its function is as follows. Olfactory receptor specific for trace amines, such as triethylamine, N-methylpiperidine, N,N-dimethylcyclohexylamine (DMCHA), beta-phenylethylamine (beta-PEA), cadaverine (CAD) and polyamines such as spermidine. Trace amine compounds are enriched in animal body fluids and act on trace amine-associated receptors (TAARs) to elicit both intraspecific and interspecific innate behaviors. Trace amine-binding causes a conformation change that triggers signaling via G(s)-class of G alpha proteins (GNAL or GNAS). In mature olfactory sensory neurons, Taar9 is coupled with GNAL/G(olf)G alpha protein and mediates activation of adenylate cyclase activity to activate cAMP signaling and eventually transmit odorant signals to achieve membrane depolarization. In immature olfactory sensory neurons, Taar9 is coupled with GNAS/G(s) G alpha proteins. The chain is Trace amine-associated receptor 9 from Rattus norvegicus (Rat).